The sequence spans 307 residues: Protoheme IX farnesyltransferase (307 aa).

8 consecutive transmembrane segments (helical) span residues 32–52, 65–85, 108–128, 131–151, 158–178, 186–206, 251–271, and 287–307; these read MGIV…ALHF, FFTI…NNYI, PGFA…FLLL, PMAV…YSLW, LNTV…WAAI, IAWM…LALA, LGIT…VLGF, and FVYS…VTFF.

It belongs to the UbiA prenyltransferase family. Protoheme IX farnesyltransferase subfamily. As to quaternary structure, interacts with CtaA.

The protein localises to the cell membrane. The enzyme catalyses heme b + (2E,6E)-farnesyl diphosphate + H2O = Fe(II)-heme o + diphosphate. The protein operates within porphyrin-containing compound metabolism; heme O biosynthesis; heme O from protoheme: step 1/1. Converts heme B (protoheme IX) to heme O by substitution of the vinyl group on carbon 2 of heme B porphyrin ring with a hydroxyethyl farnesyl side group. The sequence is that of Protoheme IX farnesyltransferase from Bacillus cereus (strain G9842).